The chain runs to 462 residues: Asparagine--tRNA ligase (462 aa).

Belongs to the class-II aminoacyl-tRNA synthetase family. As to quaternary structure, homodimer.

The protein resides in the cytoplasm. It carries out the reaction tRNA(Asn) + L-asparagine + ATP = L-asparaginyl-tRNA(Asn) + AMP + diphosphate + H(+). The chain is Asparagine--tRNA ligase from Borreliella afzelii (strain PKo) (Borrelia afzelii).